A 1216-amino-acid polypeptide reads, in one-letter code: ATP-dependent helicase/nuclease subunit A (1216 aa).

Residues 26–488 (QKKTAEQIEA…ILLKANFRSS (463 aa)) enclose the UvrD-like helicase ATP-binding domain. Position 47–54 (47–54 (ASAGSGKT)) interacts with ATP. Residues 515–802 (KHQLVFANTK…ELMTIHKSKG (288 aa)) form the UvrD-like helicase C-terminal domain.

Belongs to the helicase family. AddA subfamily. Heterodimer of AddA and AddB/RexB. Mg(2+) serves as cofactor.

The catalysed reaction is Couples ATP hydrolysis with the unwinding of duplex DNA by translocating in the 3'-5' direction.. The enzyme catalyses ATP + H2O = ADP + phosphate + H(+). Its function is as follows. The heterodimer acts as both an ATP-dependent DNA helicase and an ATP-dependent, dual-direction single-stranded exonuclease. Recognizes the chi site generating a DNA molecule suitable for the initiation of homologous recombination. The AddA nuclease domain is required for chi fragment generation; this subunit has the helicase and 3' -&gt; 5' nuclease activities. This Streptococcus pneumoniae (strain ATCC 700669 / Spain 23F-1) protein is ATP-dependent helicase/nuclease subunit A.